The sequence spans 362 residues: Carbamoyl phosphate synthase pyrimidine-specific small chain (362 aa).

Residues 1–168 (MKRQLILEDG…TRDPYHVPGP (168 aa)) form a CPSase region. L-glutamine is bound by residues serine 45, glycine 219, and glycine 221. The Glutamine amidotransferase type-1 domain maps to 171–358 (RVVLVDYGMK…IKLMESNKHR (188 aa)). Cysteine 246 acts as the Nucleophile in catalysis. Leucine 247, glutamine 250, asparagine 288, glycine 290, and tyrosine 291 together coordinate L-glutamine. Active-site residues include histidine 331 and glutamate 333.

The protein belongs to the CarA family. As to quaternary structure, composed of two chains; the small (or glutamine) chain promotes the hydrolysis of glutamine to ammonia, which is used by the large (or ammonia) chain to synthesize carbamoyl phosphate. Tetramer of heterodimers (alpha,beta)4.

It catalyses the reaction hydrogencarbonate + L-glutamine + 2 ATP + H2O = carbamoyl phosphate + L-glutamate + 2 ADP + phosphate + 2 H(+). The catalysed reaction is L-glutamine + H2O = L-glutamate + NH4(+). The protein operates within pyrimidine metabolism; UMP biosynthesis via de novo pathway; (S)-dihydroorotate from bicarbonate: step 1/3. Its function is as follows. Small subunit of the glutamine-dependent carbamoyl phosphate synthetase (CPSase). CPSase catalyzes the formation of carbamoyl phosphate from the ammonia moiety of glutamine, carbonate, and phosphate donated by ATP, constituting the first step of the biosynthetic pathway leading to pyrimidine nucleotides. The small subunit (glutamine amidotransferase) binds and cleaves glutamine to supply the large subunit with the substrate ammonia. This Halalkalibacterium halodurans (strain ATCC BAA-125 / DSM 18197 / FERM 7344 / JCM 9153 / C-125) (Bacillus halodurans) protein is Carbamoyl phosphate synthase pyrimidine-specific small chain.